The following is a 350-amino-acid chain: E3 ubiquitin-protein ligase TRIM63 (350 aa).

An RING-type zinc finger spans residues Cys-23 to Arg-79. The segment at Arg-74–Ala-218 is interaction with TTN. The segment at Gly-117 to Leu-159 adopts a B box-type zinc-finger fold. Zn(2+)-binding residues include Cys-122, His-125, Cys-145, and His-151. A coiled-coil region spans residues Glu-207–Glu-269. Residues Leu-267–Gly-325 enclose the COS domain. Over residues Gly-325 to Val-344 the composition is skewed to acidic residues. Positions Gly-325–Gln-350 are disordered.

Homodimer. Homooligomer and heterooligomer. Interacts with SUMO2, titin/TTN and GMEB1. Interacts with TRIM54 and probably with TRIM55. Interacts with TNNI3. Forms a ternary complex with RACK1 and PRKCE. Interacts with CKM.

Its subcellular location is the cytoplasm. The protein resides in the nucleus. It is found in the myofibril. The protein localises to the sarcomere. It localises to the m line. Its subcellular location is the z line. The enzyme catalyses S-ubiquitinyl-[E2 ubiquitin-conjugating enzyme]-L-cysteine + [acceptor protein]-L-lysine = [E2 ubiquitin-conjugating enzyme]-L-cysteine + N(6)-ubiquitinyl-[acceptor protein]-L-lysine.. Its pathway is protein modification; protein ubiquitination. In terms of biological role, E3 ubiquitin ligase. Mediates the ubiquitination and subsequent proteasomal degradation of CKM, GMEB1 and HIBADH. Regulates the proteasomal degradation of muscle proteins under amino acid starvation, where muscle protein is catabolized to provide other organs with amino acids. Inhibits de novo skeletal muscle protein synthesis under amino acid starvation. Regulates proteasomal degradation of cardiac troponin I/TNNI3 and probably of other sarcomeric-associated proteins. May play a role in striated muscle atrophy and hypertrophy by regulating an anti-hypertrophic PKC-mediated signaling pathway. May regulate the organization of myofibrils through TTN in muscle cells. The protein is E3 ubiquitin-protein ligase TRIM63 (Trim63) of Mus musculus (Mouse).